The following is a 348-amino-acid chain: uncharacterized protein (348 aa).

The protein localises to the virion. This is an uncharacterized protein from Acanthamoeba polyphaga mimivirus (APMV).